A 686-amino-acid polypeptide reads, in one-letter code: Proprotein convertase subtilisin/kexin type 9 (686 aa).

A signal peptide spans 1–28 (MGTVSSRRLWWPLPLLLLLLLGPAGTRA). The propeptide occupies 29–150 (QEDDDDDYEE…IEEDSSVFAQ (122 aa)). A Sulfotyrosine modification is found at Tyr36. At Ser45 the chain carries Phosphoserine. In terms of domain architecture, Inhibitor I9 spans 75 to 147 (TYVVVLKEET…VDYIEEDSSV (73 aa)). One can recognise a Peptidase S8 domain in the interval 153 to 459 (PWNLERITPA…GWQLFCRTVW (307 aa)). Catalysis depends on charge relay system residues Asp184 and His224. 2 disulfide bridges follow: Cys221/Cys253 and Cys321/Cys356. Ser384 (charge relay system) is an active-site residue. A C-terminal domain region spans residues 448 to 686 (GEGWQLFCRT…CRSQHLAQAS (239 aa)). Cystine bridges form between Cys455-Cys525, Cys475-Cys524, and Cys484-Cys507. A glycan (N-linked (GlcNAc...) asparagine) is linked at Asn531. Disulfide bonds link Cys532–Cys599, Cys550–Cys598, Cys560–Cys586, Cys606–Cys677, Cys624–Cys676, and Cys633–Cys652. The residue at position 686 (Ser686) is a Phosphoserine.

It belongs to the peptidase S8 family. In terms of assembly, monomer. Can self-associate to form dimers and higher multimers which may have increased LDLR degrading activity. The precursor protein but not the mature protein may form multimers. Interacts with APOB, VLDLR, LRP8/APOER2 and BACE1. The full-length immature form (pro-PCSK9) interacts with SCNN1A, SCNN1B and SCNN1G. The pro-PCSK9 form (via C-terminal domain) interacts with LDLR. Interacts (via the C-terminal domain) with ANXA2 (via repeat Annexin 1); the interaction inhibits the degradation of LDLR. Ca(2+) is required as a cofactor. Post-translationally, cleavage by furin and PCSK5 generates a truncated inactive protein that is unable to induce LDLR degradation. Undergoes autocatalytic cleavage in the endoplasmic reticulum to release the propeptide from the N-terminus and the cleavage of the propeptide is strictly required for its maturation and activation. The cleaved propeptide however remains associated with the catalytic domain through non-covalent interactions, preventing potential substrates from accessing its active site. As a result, it is secreted from cells as a propeptide-containing, enzymatically inactive protein. In terms of processing, phosphorylation protects the propeptide against proteolysis.

The protein resides in the cytoplasm. Its subcellular location is the secreted. The protein localises to the endosome. It localises to the lysosome. It is found in the cell surface. The protein resides in the endoplasmic reticulum. Its subcellular location is the golgi apparatus. Its proteolytic activity is autoinhibited by the non-covalent binding of the propeptide to the catalytic domain. Inhibited by EGTA. In terms of biological role, crucial player in the regulation of plasma cholesterol homeostasis. Binds to low-density lipid receptor family members: low density lipoprotein receptor (LDLR), very low density lipoprotein receptor (VLDLR), apolipoprotein E receptor (LRP1/APOER) and apolipoprotein receptor 2 (LRP8/APOER2), and promotes their degradation in intracellular acidic compartments. Acts via a non-proteolytic mechanism to enhance the degradation of the hepatic LDLR through a clathrin LDLRAP1/ARH-mediated pathway. May prevent the recycling of LDLR from endosomes to the cell surface or direct it to lysosomes for degradation. Can induce ubiquitination of LDLR leading to its subsequent degradation. Inhibits intracellular degradation of APOB via the autophagosome/lysosome pathway in a LDLR-independent manner. Involved in the disposal of non-acetylated intermediates of BACE1 in the early secretory pathway. Inhibits epithelial Na(+) channel (ENaC)-mediated Na(+) absorption by reducing ENaC surface expression primarily by increasing its proteasomal degradation. Regulates neuronal apoptosis via modulation of LRP8/APOER2 levels and related anti-apoptotic signaling pathways. The sequence is that of Proprotein convertase subtilisin/kexin type 9 (PCSK9) from Saguinus labiatus (Red-chested mustached tamarin).